Reading from the N-terminus, the 929-residue chain is Isoleucine--tRNA ligase (929 aa).

The short motif at 57–67 is the 'HIGH' region element; that stretch reads PYANGNIHVGH. E554 contacts L-isoleucyl-5'-AMP. The 'KMSKS' region signature appears at 595 to 599; it reads KMSKS. K598 provides a ligand contact to ATP. Positions 888, 891, 908, and 911 each coordinate Zn(2+).

This sequence belongs to the class-I aminoacyl-tRNA synthetase family. IleS type 1 subfamily. In terms of assembly, monomer. Requires Zn(2+) as cofactor.

The protein resides in the cytoplasm. It carries out the reaction tRNA(Ile) + L-isoleucine + ATP = L-isoleucyl-tRNA(Ile) + AMP + diphosphate. Catalyzes the attachment of isoleucine to tRNA(Ile). As IleRS can inadvertently accommodate and process structurally similar amino acids such as valine, to avoid such errors it has two additional distinct tRNA(Ile)-dependent editing activities. One activity is designated as 'pretransfer' editing and involves the hydrolysis of activated Val-AMP. The other activity is designated 'posttransfer' editing and involves deacylation of mischarged Val-tRNA(Ile). The polypeptide is Isoleucine--tRNA ligase (Streptococcus thermophilus (strain ATCC BAA-491 / LMD-9)).